Consider the following 381-residue polypeptide: Putative F-box/kelch-repeat protein At3g17570 (381 aa).

In terms of domain architecture, F-box spans 1–45 (MFTDLPRDLETEILSRVPATSLQKLKPTCKRWYTLFKDPEFLKKH). Kelch repeat units lie at residues 151–199 (SYKI…TLKG), 229–281 (LLYQ…KIVE), and 331–379 (RFYI…GGKR).

The polypeptide is Putative F-box/kelch-repeat protein At3g17570 (Arabidopsis thaliana (Mouse-ear cress)).